Consider the following 1576-residue polypeptide: Spermatogenesis-associated protein 31D1 (1576 aa).

Residues 29 to 49 form a helical membrane-spanning segment; the sequence is FICLSGLGLFILYLFYVVLTL. 5 disordered regions span residues 170–197, 542–572, 782–801, 952–1033, and 1293–1347; these read FTLA…PPPP, HESP…QGQS, KDHL…RSNS, SQGD…TDFQ, and RVSP…PPPE. Residues 546 to 565 show a composition bias toward pro residues; the sequence is VLPPPQPLSLPSTQPLPLPQ. The span at 966–980 shows a compositional bias: polar residues; it reads RSTFQGEKLGTTSSV. Basic and acidic residues predominate over residues 1004–1019; it reads QFSDTDHDLIETDSKD. Over residues 1020 to 1032 the composition is skewed to polar residues; it reads GASTSLRRGTTDF.

Belongs to the SPATA31 family.

The protein resides in the membrane. In terms of biological role, may play a role in spermatogenesis. The polypeptide is Spermatogenesis-associated protein 31D1 (SPATA31D1) (Homo sapiens (Human)).